The following is a 356-amino-acid chain: UDP-N-acetylglucosamine--N-acetylmuramyl-(pentapeptide) pyrophosphoryl-undecaprenol N-acetylglucosamine transferase (356 aa).

Residues Arg166, Ser196, and Gln290 each contribute to the UDP-N-acetyl-alpha-D-glucosamine site.

This sequence belongs to the glycosyltransferase 28 family. MurG subfamily.

It localises to the cell membrane. The enzyme catalyses Mur2Ac(oyl-L-Ala-gamma-D-Glu-L-Lys-D-Ala-D-Ala)-di-trans,octa-cis-undecaprenyl diphosphate + UDP-N-acetyl-alpha-D-glucosamine = beta-D-GlcNAc-(1-&gt;4)-Mur2Ac(oyl-L-Ala-gamma-D-Glu-L-Lys-D-Ala-D-Ala)-di-trans,octa-cis-undecaprenyl diphosphate + UDP + H(+). The protein operates within cell wall biogenesis; peptidoglycan biosynthesis. Its function is as follows. Cell wall formation. Catalyzes the transfer of a GlcNAc subunit on undecaprenyl-pyrophosphoryl-MurNAc-pentapeptide (lipid intermediate I) to form undecaprenyl-pyrophosphoryl-MurNAc-(pentapeptide)GlcNAc (lipid intermediate II). The polypeptide is UDP-N-acetylglucosamine--N-acetylmuramyl-(pentapeptide) pyrophosphoryl-undecaprenol N-acetylglucosamine transferase (Staphylococcus aureus (strain bovine RF122 / ET3-1)).